The primary structure comprises 266 residues: Interleukin-33 (266 aa).

The segment at 1 to 67 (MRPRMKYSNS…ETSYFRKEPT (67 aa)) is homeodomain-like HTH domain. A propeptide spanning residues 1–101 (MRPRMKYSNS…RSLLGSIQAF (101 aa)) is cleaved from the precursor. Residues 66 to 108 (PTKRYSLKSGTKHEENFSAYPRDSRKRSLLGSIQAFAASVDTL) are interaction with RELA.

This sequence belongs to the IL-1 family. Highly divergent. As to quaternary structure, (Microbial infection) Interacts (in reduced form) with H.polygyrus ARI; the interaction abolishes the interaction with its primary receptor IL1RL1. In terms of assembly, forms a 1:1:1 heterotrimeric complex with its primary high-affinity receptor IL1RL1 and the coreceptor IL1RAP. Interacts with cargo receptor TMED10; the interaction mediates the translocation from the cytoplasm into the ERGIC (endoplasmic reticulum-Golgi intermediate compartment) and thereby secretion. Post-translationally, the full-length protein can be released from cells and is able to signal via the IL1RL1/ST2 receptor. However, proteolytic processing by CELA1, CSTG/cathepsin G and ELANE/neutrophil elastase produces C-terminal peptides that are more active than the unprocessed full-length protein. May also be proteolytically processed by calpains. Proteolytic cleavage mediated by apoptotic caspases including CASP3 and CASP7 results in IL33 inactivation. In vitro proteolytic cleavage by CASP1 was reported but could not be confirmed in vivo suggesting that IL33 is probably not a direct substrate for that caspase.

The protein resides in the nucleus. Its subcellular location is the chromosome. The protein localises to the cytoplasm. It is found in the cytoplasmic vesicle. It localises to the secretory vesicle. The protein resides in the secreted. In terms of biological role, cytokine that binds to and signals through the IL1RL1/ST2 receptor which in turn activates NF-kappa-B and MAPK signaling pathways in target cells. Involved in the maturation of Th2 cells inducing the secretion of T-helper type 2-associated cytokines. Also involved in activation of mast cells, basophils, eosinophils and natural killer cells. Acts as an enhancer of polarization of alternatively activated macrophages. Acts as a chemoattractant for Th2 cells, and may function as an 'alarmin', that amplifies immune responses during tissue injury. Induces rapid UCP2-dependent mitochondrial rewiring that attenuates the generation of reactive oxygen species and preserves the integrity of Krebs cycle required for persistent production of itaconate and subsequent GATA3-dependent differentiation of inflammation-resolving alternatively activated macrophages. Its function is as follows. In quiescent endothelia the uncleaved form is constitutively and abundantly expressed, and acts as a chromatin-associated nuclear factor with transcriptional repressor properties, it may sequester nuclear NF-kappaB/RELA, lowering expression of its targets. This form is rapidely lost upon angiogenic or pro-inflammatory activation. The protein is Interleukin-33 of Mus musculus (Mouse).